The primary structure comprises 442 residues: N-acetyl-S-alkylcysteine sulfoxide monooxygenase (442 aa).

Residues D58, T95, H145, Y149, S219, and S220 each contribute to the FMN site.

It belongs to the NtaA/SnaA/DszA monooxygenase family. In terms of assembly, homodimer.

The catalysed reaction is (R)-N-acetyl-S-benzyl-L-cysteine sulfoxide + FMNH2 + O2 = N-acetyl-S-hydroxy-L-cysteine + benzaldehyde + FMN + H2O + H(+). Its pathway is amino-acid metabolism. Functionally, involved in a cysteine salvage pathway from S-alkylcysteine. Catalyzes the C-S bond cleavage in N-acetyl-S-benzyl-L-cysteine sulfoxide leading to N-acetyl-S-hydroxy-L-cysteine and benzaldehyde. This pathway is likely important in the catabolism of alkylated cysteine generated by proteolysis of alkylated glutathione formed in the detoxification of a wide range of electrophiles. Has much less efficient activity with N-acetyl-S-methyl-L-cysteine sulfoxide as substrate. Cannot use S-alkylated L-cysteine sulfones and ketone analogs as substrates, demonstrating that the sulfoxide is required for activity. The sequence is that of N-acetyl-S-alkylcysteine sulfoxide monooxygenase from Bacillus subtilis (strain 168).